Consider the following 575-residue polypeptide: DNA mismatch repair protein MutL (575 aa).

Belongs to the DNA mismatch repair MutL/HexB family.

This protein is involved in the repair of mismatches in DNA. It is required for dam-dependent methyl-directed DNA mismatch repair. May act as a 'molecular matchmaker', a protein that promotes the formation of a stable complex between two or more DNA-binding proteins in an ATP-dependent manner without itself being part of a final effector complex. This Coxiella burnetii (strain CbuG_Q212) (Coxiella burnetii (strain Q212)) protein is DNA mismatch repair protein MutL.